Reading from the N-terminus, the 189-residue chain is Casparian strip membrane protein 1 (189 aa).

The Cytoplasmic segment spans residues 1 to 42 (MEKNESSAIEIAESSKERKGKAPLLAAAVGHDRAAGYKRGVS). A helical transmembrane segment spans residues 43–63 (IFDLILRISAATAALAATIVM). Residues 64 to 90 (GTTEQTLPFFTQFFQFRAQYDDLPTFT) are Extracellular-facing. Residues 91–111 (FFVVGMAIVTGYLILSVPLSI) traverse the membrane as a helical segment. Topologically, residues 112–130 (VCIARPVAIGPRFLLIVCD) are cytoplasmic. Residues 131-151 (TVTAVLATSAAGSSAAIVYLA) form a helical membrane-spanning segment. The Extracellular segment spans residues 152 to 189 (HNGNSDANWLAICQQFNDFCQRVSGAVVAAFVAVVCSS).

The protein belongs to the Casparian strip membrane proteins (CASP) family. As to quaternary structure, homodimer and heterodimers.

Its subcellular location is the cell membrane. Its function is as follows. Regulates membrane-cell wall junctions and localized cell wall deposition. Required for establishment of the Casparian strip membrane domain (CSD) and the subsequent formation of Casparian strips, a cell wall modification of the root endodermis that determines an apoplastic barrier between the intraorganismal apoplasm and the extraorganismal apoplasm and prevents lateral diffusion. The chain is Casparian strip membrane protein 1 from Striga asiatica (Asiatic witchweed).